The primary structure comprises 377 residues: Glutamate 5-kinase (377 aa).

Lys20 serves as a coordination point for ATP. Substrate contacts are provided by Ser60, Asp147, and Asn159. 179–180 (SD) provides a ligand contact to ATP. One can recognise a PUA domain in the interval 281–355 (HGQLHLDAGA…GQSTSDLPEF (75 aa)).

The protein belongs to the glutamate 5-kinase family.

It localises to the cytoplasm. It catalyses the reaction L-glutamate + ATP = L-glutamyl 5-phosphate + ADP. It participates in amino-acid biosynthesis; L-proline biosynthesis; L-glutamate 5-semialdehyde from L-glutamate: step 1/2. Functionally, catalyzes the transfer of a phosphate group to glutamate to form L-glutamate 5-phosphate. The polypeptide is Glutamate 5-kinase (Corynebacterium jeikeium (strain K411)).